Consider the following 64-residue polypeptide: Large ribosomal subunit protein bL28 (64 aa).

Belongs to the bacterial ribosomal protein bL28 family.

The polypeptide is Large ribosomal subunit protein bL28 (Campylobacter jejuni subsp. jejuni serotype O:6 (strain 81116 / NCTC 11828)).